A 226-amino-acid polypeptide reads, in one-letter code: UPF0502 protein azo0627 (226 aa).

Belongs to the UPF0502 family.

This chain is UPF0502 protein azo0627, found in Azoarcus sp. (strain BH72).